A 107-amino-acid polypeptide reads, in one-letter code: Large ribosomal subunit protein P1 (107 aa).

Low complexity predominate over residues 67 to 82 (PTATSAAAAPAAGEAS). The disordered stretch occupies residues 67–107 (PTATSAAAAPAAGEASGKAEEKKKEEPEEEGDDDMGFGLFD). Residues 83–92 (GKAEEKKKEE) are compositionally biased toward basic and acidic residues.

Belongs to the eukaryotic ribosomal protein P1/P2 family. As to quaternary structure, P1 and P2 exist as dimers at the large ribosomal subunit.

In terms of biological role, plays an important role in the elongation step of protein synthesis. The sequence is that of Large ribosomal subunit protein P1 from Leishmania peruviana.